The chain runs to 969 residues: RNA polymerase-associated protein RapA (969 aa).

In terms of domain architecture, Helicase ATP-binding spans 164–334 (EVGRRHAPRV…FARLRLLDSD (171 aa)). 177–184 (DEVGLGKT) contributes to the ATP binding site. The DEAH box motif lies at 280-283 (DEAH). The Helicase C-terminal domain occupies 492–668 (RVNWLLEKLK…GSNEALDDVI (177 aa)).

Belongs to the SNF2/RAD54 helicase family. RapA subfamily. Interacts with the RNAP. Has a higher affinity for the core RNAP than for the holoenzyme. Its ATPase activity is stimulated by binding to RNAP.

Its function is as follows. Transcription regulator that activates transcription by stimulating RNA polymerase (RNAP) recycling in case of stress conditions such as supercoiled DNA or high salt concentrations. Probably acts by releasing the RNAP, when it is trapped or immobilized on tightly supercoiled DNA. Does not activate transcription on linear DNA. Probably not involved in DNA repair. The protein is RNA polymerase-associated protein RapA of Vibrio vulnificus (strain CMCP6).